Reading from the N-terminus, the 201-residue chain is UPF0301 protein RER_60040 (201 aa).

It belongs to the UPF0301 (AlgH) family.

The chain is UPF0301 protein RER_60040 from Rhodococcus erythropolis (strain PR4 / NBRC 100887).